A 440-amino-acid chain; its full sequence is L-gulonolactone oxidase (440 aa).

Residues 17 to 187 form the FAD-binding PCMH-type domain; it reads YGCCPEMYFQ…LTVTLQCVPQ (171 aa). Pros-8alpha-FAD histidine is present on H54. A helical transmembrane segment spans residues 253–273; sequence FYLLEFLLWISTFLPGLVGWI.

The protein belongs to the oxygen-dependent FAD-linked oxidoreductase family. Requires FAD as cofactor.

The protein resides in the microsome membrane. It is found in the endoplasmic reticulum membrane. The catalysed reaction is L-gulono-1,4-lactone + O2 = L-ascorbate + H2O2 + H(+). It participates in cofactor biosynthesis; L-ascorbate biosynthesis via UDP-alpha-D-glucuronate pathway; L-ascorbate from UDP-alpha-D-glucuronate: step 4/4. Its function is as follows. Oxidizes L-gulono-1,4-lactone to hydrogen peroxide and L-xylo-hexulonolactone which spontaneously isomerizes to L-ascorbate. The chain is L-gulonolactone oxidase (GULO) from Bos taurus (Bovine).